Consider the following 202-residue polypeptide: 3-isopropylmalate dehydratase small subunit 1 (202 aa).

It belongs to the LeuD family. LeuD type 1 subfamily. As to quaternary structure, heterodimer of LeuC and LeuD.

It catalyses the reaction (2R,3S)-3-isopropylmalate = (2S)-2-isopropylmalate. The protein operates within amino-acid biosynthesis; L-leucine biosynthesis; L-leucine from 3-methyl-2-oxobutanoate: step 2/4. Its function is as follows. Catalyzes the isomerization between 2-isopropylmalate and 3-isopropylmalate, via the formation of 2-isopropylmaleate. The protein is 3-isopropylmalate dehydratase small subunit 1 of Bordetella pertussis (strain Tohama I / ATCC BAA-589 / NCTC 13251).